We begin with the raw amino-acid sequence, 122 residues long: Large ribosomal subunit protein uL14 (122 aa).

It belongs to the universal ribosomal protein uL14 family. In terms of assembly, part of the 50S ribosomal subunit. Forms a cluster with proteins L3 and L19. In the 70S ribosome, L14 and L19 interact and together make contacts with the 16S rRNA in bridges B5 and B8.

In terms of biological role, binds to 23S rRNA. Forms part of two intersubunit bridges in the 70S ribosome. The polypeptide is Large ribosomal subunit protein uL14 (Mycoplasma mobile (strain ATCC 43663 / 163K / NCTC 11711) (Mesomycoplasma mobile)).